The primary structure comprises 1072 residues: DNA-directed RNA polymerase subunit beta (1072 aa).

It belongs to the RNA polymerase beta chain family. As to quaternary structure, in plastids the minimal PEP RNA polymerase catalytic core is composed of four subunits: alpha, beta, beta', and beta''. When a (nuclear-encoded) sigma factor is associated with the core the holoenzyme is formed, which can initiate transcription.

Its subcellular location is the plastid. The protein resides in the chloroplast. It carries out the reaction RNA(n) + a ribonucleoside 5'-triphosphate = RNA(n+1) + diphosphate. Its function is as follows. DNA-dependent RNA polymerase catalyzes the transcription of DNA into RNA using the four ribonucleoside triphosphates as substrates. The protein is DNA-directed RNA polymerase subunit beta of Amborella trichopoda.